The following is a 265-amino-acid chain: Glutamate racemase (265 aa).

Residues 12 to 13 (DS) and 44 to 45 (YG) contribute to the substrate site. Cysteine 75 (proton donor/acceptor) is an active-site residue. Residue 76–77 (NT) coordinates substrate. The active-site Proton donor/acceptor is the cysteine 186. A substrate-binding site is contributed by 187-188 (TH).

The protein belongs to the aspartate/glutamate racemases family.

The enzyme catalyses L-glutamate = D-glutamate. It participates in cell wall biogenesis; peptidoglycan biosynthesis. Functionally, provides the (R)-glutamate required for cell wall biosynthesis. This is Glutamate racemase from Pseudomonas aeruginosa (strain ATCC 15692 / DSM 22644 / CIP 104116 / JCM 14847 / LMG 12228 / 1C / PRS 101 / PAO1).